The sequence spans 181 residues: Large ribosomal subunit protein uL10 (181 aa).

The protein belongs to the universal ribosomal protein uL10 family. In terms of assembly, part of the ribosomal stalk of the 50S ribosomal subunit. The N-terminus interacts with L11 and the large rRNA to form the base of the stalk. The C-terminus forms an elongated spine to which L12 dimers bind in a sequential fashion forming a multimeric L10(L12)X complex.

Functionally, forms part of the ribosomal stalk, playing a central role in the interaction of the ribosome with GTP-bound translation factors. This is Large ribosomal subunit protein uL10 from Protochlamydia amoebophila (strain UWE25).